The sequence spans 188 residues: dCTP deaminase (188 aa).

DCTP-binding positions include Lys-111–Arg-116, Thr-135–Glu-137, Gln-156, Tyr-170, and Gln-180. The active-site Proton donor/acceptor is the Glu-137.

Belongs to the dCTP deaminase family. Homotrimer.

It catalyses the reaction dCTP + H2O + H(+) = dUTP + NH4(+). It participates in pyrimidine metabolism; dUMP biosynthesis; dUMP from dCTP (dUTP route): step 1/2. In terms of biological role, catalyzes the deamination of dCTP to dUTP. The chain is dCTP deaminase from Nitrosomonas eutropha (strain DSM 101675 / C91 / Nm57).